Here is a 910-residue protein sequence, read N- to C-terminus: Coatomer subunit beta'-2 (910 aa).

WD repeat units lie at residues glutamine 13–serine 52, valine 55–valine 94, alanine 97–glutamine 136, glycine 140–threonine 180, glycine 183–threonine 224, glycine 227–threonine 266, tyrosine 269–aspartate 309, threonine 351–leucine 393, and arginine 461–aspartate 501. The interval alanine 882 to alanine 910 is disordered. Residues glutamine 900–alanine 910 show a composition bias toward polar residues.

This sequence belongs to the WD repeat COPB2 family. As to quaternary structure, oligomeric complex that consists of at least the alpha, beta, beta', gamma, delta, epsilon and zeta subunits.

It is found in the cytoplasm. Its subcellular location is the golgi apparatus membrane. It localises to the cytoplasmic vesicle. The protein localises to the COPI-coated vesicle membrane. In terms of biological role, the coatomer is a cytosolic protein complex that binds to dilysine motifs and reversibly associates with Golgi non-clathrin-coated vesicles, which further mediate biosynthetic protein transport from the ER, via the Golgi up to the trans Golgi network. Coatomer complex is required for budding from Golgi membranes, and is essential for the retrograde Golgi-to-ER transport of dilysine-tagged proteins. The chain is Coatomer subunit beta'-2 from Oryza sativa subsp. japonica (Rice).